Reading from the N-terminus, the 188-residue chain is Transmembrane protein 160 (188 aa).

The transit peptide at 1–96 (MGGGWWWARA…ISFMQSDMGR (96 aa)) directs the protein to the mitochondrion. The tract at residues 24–52 (PPQRPRSGGARGSFAPGHGPRAGASPPPV) is disordered. Position 48 is a phosphoserine (serine 48). A run of 2 helical transmembrane segments spans residues 102–122 (FFLL…VGLA) and 135–155 (AAVG…AVGL). The interval 168-188 (PEDDGTASAEGPDEAGRPPPE) is disordered.

It belongs to the TMEM160 family.

Its subcellular location is the mitochondrion inner membrane. The protein is Transmembrane protein 160 of Homo sapiens (Human).